Consider the following 354-residue polypeptide: Methylthioribose-1-phosphate isomerase (354 aa).

Substrate-binding positions include 58-60 (RGA), Arg-101, and Gln-204. The active-site Proton donor is Asp-245. Residue 255–256 (NK) participates in substrate binding.

The protein belongs to the eIF-2B alpha/beta/delta subunits family. MtnA subfamily.

The enzyme catalyses 5-(methylsulfanyl)-alpha-D-ribose 1-phosphate = 5-(methylsulfanyl)-D-ribulose 1-phosphate. The protein operates within amino-acid biosynthesis; L-methionine biosynthesis via salvage pathway; L-methionine from S-methyl-5-thio-alpha-D-ribose 1-phosphate: step 1/6. Catalyzes the interconversion of methylthioribose-1-phosphate (MTR-1-P) into methylthioribulose-1-phosphate (MTRu-1-P). The sequence is that of Methylthioribose-1-phosphate isomerase from Stenotrophomonas maltophilia (strain R551-3).